A 552-amino-acid chain; its full sequence is Hyaluronan synthase 2 (552 aa).

The Cytoplasmic segment spans residues 1–11 (MHCERFLCILR). The chain crosses the membrane as a helical span at residues 12–32 (IIGTTLFGVSLLLGITAAYIV). The Extracellular portion of the chain corresponds to 33–45 (GYQFIQTDNYYFS). The chain crosses the membrane as a helical span at residues 46–66 (FGLYGAFLASHLIIQSLFAFL). The Cytoplasmic segment spans residues 67–374 (EHRKMKKSLE…NAMWFHKHHL (308 aa)). Phosphothreonine is present on Thr110. Lys190 is covalently cross-linked (Glycyl lysine isopeptide (Lys-Gly) (interchain with G-Cter in ubiquitin)). The O-linked (GlcNAc) serine glycan is linked to Ser221. At Thr328 the chain carries Phosphothreonine. Residues 375–395 (WMTYEAVITGFFPFFLIATVI) form a helical membrane-spanning segment. Over 396–402 (QLFYRGK) the chain is Extracellular. Residues 403–423 (IWNILLFLLTVQLVGLIKSSF) traverse the membrane as a helical segment. Residues 424 to 429 (ASCLRG) lie on the Cytoplasmic side of the membrane. The helical transmembrane segment at 430 to 450 (NIVMVFMSLYSVLYMSSLLPA) threads the bilayer. The Extracellular segment spans residues 451–475 (KMFAIATINKAGWGTSGRKTIVVNF). Residues 476–496 (IGLIPVSVWFTILLGGVIFTI) form a helical membrane-spanning segment. Residues 497-510 (YKESKKPFSESKQT) are Cytoplasmic-facing. The helical transmembrane segment at 511 to 531 (VLIVGTLLYACYWVMLLTLYV) threads the bilayer. Residues 532-552 (VLINKCGRRKKGQQYDMVLDV) lie on the Extracellular side of the membrane.

The protein belongs to the NodC/HAS family. Homodimer; dimerization promotes enzymatic activity. Forms heterodimer with HAS3. Forms heterodimer with HAS1. Mg(2+) is required as a cofactor. Post-translationally, phosphorylation at Thr-328 is essential for hyaluronan synthase activity. In terms of processing, O-GlcNAcylation at Ser-221 increases the stability of HAS2 and plasma membrane localization. Ubiquitination at Lys-190; this ubiquitination is essential for hyaluronan synthase activity and homo- or hetero-oligomerization. Can also be poly-ubiquitinated. Deubiquitinated by USP17L22/USP17 and USP4. USP17L22/USP17 efficiently removes 'Lys-63'- and 'Lys-48'-linked polyubiquitin chains, whereas USP4 preferentially removes monoubiquitination and, partially, both 'Lys-63'- and 'Lys-48'-linked polyubiquitin chain. Overexpressed in skin fibroblasts.

The protein localises to the cell membrane. Its subcellular location is the endoplasmic reticulum membrane. It localises to the vesicle. The protein resides in the golgi apparatus membrane. It is found in the lysosome. The catalysed reaction is [hyaluronan](n) + UDP-N-acetyl-alpha-D-glucosamine = N-acetyl-beta-D-glucosaminyl-(1-&gt;4)-[hyaluronan](n) + UDP + H(+). The enzyme catalyses N-acetyl-beta-D-glucosaminyl-(1-&gt;4)-[hyaluronan](n) + UDP-alpha-D-glucuronate = [hyaluronan](n+1) + UDP + H(+). It participates in glycan biosynthesis; hyaluronan biosynthesis. In terms of biological role, catalyzes the addition of GlcNAc or GlcUA monosaccharides to the nascent hyaluronan polymer. Therefore, it is essential to hyaluronan synthesis a major component of most extracellular matrices that has a structural role in tissues architectures and regulates cell adhesion, migration and differentiation. This is one of three isoenzymes responsible for cellular hyaluronan synthesis and it is particularly responsible for the synthesis of high molecular mass hyaluronan. The protein is Hyaluronan synthase 2 (Has2) of Heterocephalus glaber (Naked mole rat).